The sequence spans 419 residues: Transcription factor 7 (419 aa).

Over residues 1-12 (MPQLDSGGGGAG) the composition is skewed to gly residues. A CTNNB1-binding region spans residues 1–60 (MPQLDSGGGGAGRGDDLGAPDELLAFQDEGEEQDDKNRDSPVGPERDLAELKSSLVNESE). Disordered regions lie at residues 1-111 (MPQL…LKAP) and 134-200 (PASG…SGFY). Basic and acidic residues-rich tracts occupy residues 35-50 (DKNR…DLAE) and 86-109 (LGRE…DGLK). Positions 143–158 (QPQPPLHNKPGQPPHG) are enriched in pro residues. Residues 304 to 372 (IKKPLNAFML…LHMQLYPGWS (69 aa)) constitute a DNA-binding region (HMG box). The segment at 374–406 (RDNYGKKKRRSREKHQESTTGGKRNAFGTYPEK) is disordered. The Nuclear localization signal motif lies at 379–385 (KKKRRSR).

This sequence belongs to the TCF/LEF family. As to quaternary structure, binds the armadillo repeat of CTNNB1 and forms a stable complex. Binds TLE5, TLE1, TLE2, TLE3 and TLE4. Interacts with MLLT11. Interacts with DAZAP2. Interacts (via N-terminus) with SOX13; inhibits WNT-mediated transcriptional activity. As to expression, T-cell specific. Expressed in triple negative 2 subpopulations of T-cells and both the gamma-delta and alpha-beta T-cell lineages. Expressed in Il7 receptor positive innate-like T-cells in the mesenteric lymph nodes and spleen (at protein level).

It localises to the nucleus. Functionally, transcriptional activator involved in T-cell lymphocyte differentiation. Necessary for the survival of CD4(+) CD8(+) immature thymocytes. Isoforms lacking the N-terminal CTNNB1 binding domain cannot fulfill this role. Binds to the T-lymphocyte-specific enhancer element (5'-WWCAAAG-3') found in the promoter of the CD3E gene. Represses expression of the T-cell receptor gamma gene in alpha-beta T-cell lineages. Inhibits the developmental program of IL17A effector gamma-delta T-cell subsets via regulating the transcription of T-cell lineage effector proteins. Required for the development of natural killer receptor-positive lymphoid tissue inducer T-cells. TLE1, TLE2, TLE3 and TLE4 repress transactivation mediated by TCF7 and CTNNB1. May also act as feedback transcriptional repressor of CTNNB1 and TCF7L2 target genes. This Mus musculus (Mouse) protein is Transcription factor 7.